The sequence spans 155 residues: Small ribosomal subunit protein uS7 (155 aa).

The protein belongs to the universal ribosomal protein uS7 family. Part of the 30S ribosomal subunit. Contacts proteins S9 and S11.

Its function is as follows. One of the primary rRNA binding proteins, it binds directly to 16S rRNA where it nucleates assembly of the head domain of the 30S subunit. Is located at the subunit interface close to the decoding center, probably blocks exit of the E-site tRNA. This is Small ribosomal subunit protein uS7 from Chloroherpeton thalassium (strain ATCC 35110 / GB-78).